The following is a 427-amino-acid chain: tRNA(Ile)-lysidine synthase (427 aa).

27–32 (SGGVDS) is an ATP binding site.

The protein belongs to the tRNA(Ile)-lysidine synthase family.

It is found in the cytoplasm. It catalyses the reaction cytidine(34) in tRNA(Ile2) + L-lysine + ATP = lysidine(34) in tRNA(Ile2) + AMP + diphosphate + H(+). Its function is as follows. Ligates lysine onto the cytidine present at position 34 of the AUA codon-specific tRNA(Ile) that contains the anticodon CAU, in an ATP-dependent manner. Cytidine is converted to lysidine, thus changing the amino acid specificity of the tRNA from methionine to isoleucine. The chain is tRNA(Ile)-lysidine synthase from Streptococcus equi subsp. zooepidemicus (strain H70).